The chain runs to 54 residues: MSFENFAIITLKENVFALLPEAYAPFDPIVDDLPIIPVLFLLLAFVWQSAVKFR.

A propeptide spanning residues 1–17 (MSFENFAIITLKENVFA) is cleaved from the precursor. A helical membrane pass occupies residues 33 to 53 (LPIIPVLFLLLAFVWQSAVKF).

The protein belongs to the PsbK family. As to quaternary structure, PSII is composed of 1 copy each of membrane proteins PsbA, PsbB, PsbC, PsbD, PsbE, PsbF, PsbH, PsbI, PsbJ, PsbK, PsbL, PsbM, PsbT, PsbY, PsbZ, Psb30/Ycf12, at least 3 peripheral proteins of the oxygen-evolving complex and a large number of cofactors. It forms dimeric complexes.

It is found in the plastid. It localises to the chloroplast thylakoid membrane. In terms of biological role, one of the components of the core complex of photosystem II (PSII). PSII is a light-driven water:plastoquinone oxidoreductase that uses light energy to abstract electrons from H(2)O, generating O(2) and a proton gradient subsequently used for ATP formation. It consists of a core antenna complex that captures photons, and an electron transfer chain that converts photonic excitation into a charge separation. This chain is Photosystem II reaction center protein K, found in Euglena deses.